The following is a 104-amino-acid chain: Large ribosomal subunit protein bL21 (104 aa).

This sequence belongs to the bacterial ribosomal protein bL21 family. As to quaternary structure, part of the 50S ribosomal subunit. Contacts protein L20.

In terms of biological role, this protein binds to 23S rRNA in the presence of protein L20. The chain is Large ribosomal subunit protein bL21 from Leptospira borgpetersenii serovar Hardjo-bovis (strain JB197).